The primary structure comprises 130 residues: Small ribosomal subunit protein uS11 (130 aa).

It belongs to the universal ribosomal protein uS11 family. In terms of assembly, part of the 30S ribosomal subunit. Interacts with proteins S7 and S18. Binds to IF-3.

Located on the platform of the 30S subunit, it bridges several disparate RNA helices of the 16S rRNA. Forms part of the Shine-Dalgarno cleft in the 70S ribosome. The protein is Small ribosomal subunit protein uS11 of Borreliella afzelii (strain PKo) (Borrelia afzelii).